The chain runs to 722 residues: Polyribonucleotide nucleotidyltransferase (722 aa).

Mg(2+) contacts are provided by Asp495 and Asp501. The KH domain occupies 562-621 (PRLLSFRIDPELIGTVIGPGGRTIKGITERTNTKIDIEDGGIVTIASHDGVAAEEAQKII). The S1 motif domain occupies 631-699 (GEIFTGSITR…NRGRINLTLR (69 aa)). Positions 701–711 (VSQNNNDMNYP) are enriched in polar residues. The disordered stretch occupies residues 701–722 (VSQNNNDMNYPQPTPTPVAPLN). Residues 712–722 (QPTPTPVAPLN) show a composition bias toward pro residues.

This sequence belongs to the polyribonucleotide nucleotidyltransferase family. Mg(2+) is required as a cofactor.

It localises to the cytoplasm. It catalyses the reaction RNA(n+1) + phosphate = RNA(n) + a ribonucleoside 5'-diphosphate. In terms of biological role, involved in mRNA degradation. Catalyzes the phosphorolysis of single-stranded polyribonucleotides processively in the 3'- to 5'-direction. The polypeptide is Polyribonucleotide nucleotidyltransferase (Prochlorococcus marinus (strain MIT 9211)).